Consider the following 202-residue polypeptide: Small ribosomal subunit protein uS4 (202 aa).

Residues 17-42 (ELPGLSRKTPRRAYPPGQHGQARKKR) are disordered. Residues 90–152 (MRLDNTIFRL…DASRKLIETH (63 aa)) enclose the S4 RNA-binding domain.

The protein belongs to the universal ribosomal protein uS4 family. Part of the 30S ribosomal subunit. Contacts protein S5. The interaction surface between S4 and S5 is involved in control of translational fidelity.

Its function is as follows. One of the primary rRNA binding proteins, it binds directly to 16S rRNA where it nucleates assembly of the body of the 30S subunit. Functionally, with S5 and S12 plays an important role in translational accuracy. The chain is Small ribosomal subunit protein uS4 from Acaryochloris marina (strain MBIC 11017).